A 118-amino-acid chain; its full sequence is Ferredoxin-thioredoxin reductase, catalytic chain (118 aa).

Position 57 (Cys-57) interacts with [4Fe-4S] cluster. The active-site Nucleophile is the Cys-59. Cys-59 and Cys-89 are joined by a disulfide. [4Fe-4S] cluster-binding residues include Cys-76, Cys-78, and Cys-87.

It belongs to the ferredoxin thioredoxin reductase beta subunit family. In terms of assembly, heterodimer of subunit A (variable subunit) and subunit B (catalytic subunit). Heterodimeric FTR forms a complex with ferredoxin and thioredoxin. The cofactor is [4Fe-4S] cluster.

The protein localises to the plastid. It is found in the chloroplast. The enzyme catalyses [thioredoxin]-disulfide + 2 reduced [2Fe-2S]-[ferredoxin] + 2 H(+) = [thioredoxin]-dithiol + 2 oxidized [2Fe-2S]-[ferredoxin]. Its function is as follows. Catalytic subunit of the ferredoxin-thioredoxin reductase (FTR), which catalyzes the two-electron reduction of thioredoxins by the electrons provided by reduced ferredoxin. The sequence is that of Ferredoxin-thioredoxin reductase, catalytic chain (ftrB) from Porphyra purpurea (Red seaweed).